Here is a 110-residue protein sequence, read N- to C-terminus: UPF0339 protein SO_3888 (110 aa).

Repeat copies occupy residues 10–58 and 61–109.

This sequence belongs to the UPF0339 family. Duplicated subfamily.

This chain is UPF0339 protein SO_3888, found in Shewanella oneidensis (strain ATCC 700550 / JCM 31522 / CIP 106686 / LMG 19005 / NCIMB 14063 / MR-1).